The chain runs to 217 residues: Enoyl-CoA-hydratase (217 aa).

Belongs to the enoyl-CoA hydratase/isomerase family.

The enzyme catalyses a (3S)-3-hydroxyacyl-CoA = a (2E)-enoyl-CoA + H2O. The catalysed reaction is a 4-saturated-(3S)-3-hydroxyacyl-CoA = a (3E)-enoyl-CoA + H2O. It functions in the pathway antibiotic biosynthesis; vancomycin biosynthesis. Involved in the biosynthesis of the nonproteinogenic amino acid monomer (S)-3,5-dihydroxyphenylglycine (Dpg) responsible of the production of vancomycin and teicoplanin antibiotics. Catalyzes the syn-addition of a water molecule across the double bond of a trans-2-enoyl-CoA thioester, resulting in the formation of a beta-hydroxyacyl-CoA thioester. Physiologically, DpgB could act as a dehydratase, facilitating the aromatization of the DPA-S-DgpA or DPA-S-CoA intermediate. This is Enoyl-CoA-hydratase (dpgB) from Amycolatopsis orientalis (Nocardia orientalis).